Consider the following 96-residue polypeptide: Co-chaperonin GroES (96 aa).

The protein belongs to the GroES chaperonin family. Heptamer of 7 subunits arranged in a ring. Interacts with the chaperonin GroEL.

It is found in the cytoplasm. Its function is as follows. Together with the chaperonin GroEL, plays an essential role in assisting protein folding. The GroEL-GroES system forms a nano-cage that allows encapsulation of the non-native substrate proteins and provides a physical environment optimized to promote and accelerate protein folding. GroES binds to the apical surface of the GroEL ring, thereby capping the opening of the GroEL channel. The polypeptide is Co-chaperonin GroES (Nitrosospira multiformis (strain ATCC 25196 / NCIMB 11849 / C 71)).